Here is a 52-residue protein sequence, read N- to C-terminus: UPF0391 membrane protein Tgr7_2500 (52 aa).

2 helical membrane-spanning segments follow: residues 4–24 (WALI…SGVA) and 29–49 (WIAQ…LLGG).

Belongs to the UPF0391 family.

Its subcellular location is the cell membrane. This is UPF0391 membrane protein Tgr7_2500 from Thioalkalivibrio sulfidiphilus (strain HL-EbGR7).